The following is a 62-amino-acid chain: Large ribosomal subunit protein bL32 (62 aa).

Basic residues predominate over residues 1-16; that stretch reads MAVPKRKTSPSRRGMR. The tract at residues 1 to 62 is disordered; that stretch reads MAVPKRKTSP…QILKPKTAEV (62 aa). Basic and acidic residues predominate over residues 28–44; it reads VEDKDSGELRRPHHLDL.

Belongs to the bacterial ribosomal protein bL32 family.

The chain is Large ribosomal subunit protein bL32 from Azorhizobium caulinodans (strain ATCC 43989 / DSM 5975 / JCM 20966 / LMG 6465 / NBRC 14845 / NCIMB 13405 / ORS 571).